A 129-amino-acid polypeptide reads, in one-letter code: Small ribosomal subunit protein uS11 (129 aa).

Belongs to the universal ribosomal protein uS11 family. As to quaternary structure, part of the 30S ribosomal subunit. Interacts with proteins S7 and S18. Binds to IF-3.

Its function is as follows. Located on the platform of the 30S subunit, it bridges several disparate RNA helices of the 16S rRNA. Forms part of the Shine-Dalgarno cleft in the 70S ribosome. This is Small ribosomal subunit protein uS11 from Francisella tularensis subsp. tularensis (strain FSC 198).